Consider the following 310-residue polypeptide: MGKKMVVALGGNAILSNDASAHAQQQALVQTSAYLVHLIKQGHRLIVSHGNGPQVGNLLLQQQAADSEKNPAMPLDTCVAMTQGSIGYWLSNALNQELNKAGIKKQVATVLTQVVVDPADEAFKNPTKPIGPFLTEAEAKEAMQAGAIFKEDAGRGWRKVVPSPKPIDIHEAETINTLIKNDIITISCGGGGIPVVGQELKGVEAVIDKDFASEKLAELVDADALVILTGVDYVCINYGKPDEKQLTNVTVAELEEYKQAGHFAPGSMLPKIEAAIQFVESQPNKQAIITSLENLGSMSGDEIVGTVVTK.

As to quaternary structure, homodimer (predominantly) and homotetramer.

Its subcellular location is the cytoplasm. It catalyses the reaction hydrogencarbonate + NH4(+) + ATP = carbamoyl phosphate + ADP + H2O + H(+). It participates in metabolic intermediate metabolism; carbamoyl phosphate degradation; CO(2) and NH(3) from carbamoyl phosphate: step 1/1. Inhibited by adenosine(5')pentaphospho(5')adenosine (Ap5A), Ap6A and to a much lower extent by Ap4A. Functionally, catalyzes the reversible synthesis of carbamate and ATP from carbamoyl phosphate and ADP. Can also catalyze, although with low efficiency, the phosphorylation of bicarbonate, leading to the formation of carboxyphosphate, an unstable intermediate found in the reactions catalyzed by carbamoyl-phosphate synthase and biotin carboxylase. Can also use acetate. This chain is Carbamate kinase 1 (arcC1), found in Enterococcus faecium (Streptococcus faecium).